The following is a 245-amino-acid chain: MIIPAIDLIDGNVVRLYQGDYGQQTTFDLSPLAQLQSYEAQGAKWLHIVDLTGAKDPAKRQTLLISQLVAGLNANIQVGGGIRTEEQVTELLNIGVKRVVIGSLAVKEPELVKQWFIKYGSEAICLALDVNINQSGEKIVAVSGWQSGGGKSLESLVETFSAVGLKHALVTDISRDGTLTGANTALYQEIAASYPDIAWQASGGIATLADVAAVRDSGAAGIIIGKALLINQFNVVEAIQCWPND.

Catalysis depends on aspartate 7, which acts as the Proton acceptor. Aspartate 129 functions as the Proton donor in the catalytic mechanism.

It belongs to the HisA/HisF family.

It localises to the cytoplasm. The catalysed reaction is 1-(5-phospho-beta-D-ribosyl)-5-[(5-phospho-beta-D-ribosylamino)methylideneamino]imidazole-4-carboxamide = 5-[(5-phospho-1-deoxy-D-ribulos-1-ylimino)methylamino]-1-(5-phospho-beta-D-ribosyl)imidazole-4-carboxamide. It functions in the pathway amino-acid biosynthesis; L-histidine biosynthesis; L-histidine from 5-phospho-alpha-D-ribose 1-diphosphate: step 4/9. In Shewanella baltica (strain OS223), this protein is 1-(5-phosphoribosyl)-5-[(5-phosphoribosylamino)methylideneamino] imidazole-4-carboxamide isomerase.